The following is a 379-amino-acid chain: Succinyl-diaminopimelate desuccinylase (379 aa).

His70 contacts Zn(2+). The active site involves Asp72. Asp103 provides a ligand contact to Zn(2+). Catalysis depends on Glu137, which acts as the Proton acceptor. Residues Glu138, Glu166, and His352 each coordinate Zn(2+).

It belongs to the peptidase M20A family. DapE subfamily. As to quaternary structure, homodimer. It depends on Zn(2+) as a cofactor. Co(2+) is required as a cofactor.

The catalysed reaction is N-succinyl-(2S,6S)-2,6-diaminopimelate + H2O = (2S,6S)-2,6-diaminopimelate + succinate. It participates in amino-acid biosynthesis; L-lysine biosynthesis via DAP pathway; LL-2,6-diaminopimelate from (S)-tetrahydrodipicolinate (succinylase route): step 3/3. Its function is as follows. Catalyzes the hydrolysis of N-succinyl-L,L-diaminopimelic acid (SDAP), forming succinate and LL-2,6-diaminopimelate (DAP), an intermediate involved in the bacterial biosynthesis of lysine and meso-diaminopimelic acid, an essential component of bacterial cell walls. The sequence is that of Succinyl-diaminopimelate desuccinylase from Burkholderia multivorans (strain ATCC 17616 / 249).